The primary structure comprises 223 residues: Phosphoribosylformylglycinamidine synthase subunit PurQ (223 aa).

Residues S3–A223 enclose the Glutamine amidotransferase type-1 domain. The active-site Nucleophile is the C86. Active-site residues include H196 and E198.

As to quaternary structure, part of the FGAM synthase complex composed of 1 PurL, 1 PurQ and 2 PurS subunits.

It is found in the cytoplasm. The enzyme catalyses N(2)-formyl-N(1)-(5-phospho-beta-D-ribosyl)glycinamide + L-glutamine + ATP + H2O = 2-formamido-N(1)-(5-O-phospho-beta-D-ribosyl)acetamidine + L-glutamate + ADP + phosphate + H(+). The catalysed reaction is L-glutamine + H2O = L-glutamate + NH4(+). Its pathway is purine metabolism; IMP biosynthesis via de novo pathway; 5-amino-1-(5-phospho-D-ribosyl)imidazole from N(2)-formyl-N(1)-(5-phospho-D-ribosyl)glycinamide: step 1/2. In terms of biological role, part of the phosphoribosylformylglycinamidine synthase complex involved in the purines biosynthetic pathway. Catalyzes the ATP-dependent conversion of formylglycinamide ribonucleotide (FGAR) and glutamine to yield formylglycinamidine ribonucleotide (FGAM) and glutamate. The FGAM synthase complex is composed of three subunits. PurQ produces an ammonia molecule by converting glutamine to glutamate. PurL transfers the ammonia molecule to FGAR to form FGAM in an ATP-dependent manner. PurS interacts with PurQ and PurL and is thought to assist in the transfer of the ammonia molecule from PurQ to PurL. This is Phosphoribosylformylglycinamidine synthase subunit PurQ from Rhizobium johnstonii (strain DSM 114642 / LMG 32736 / 3841) (Rhizobium leguminosarum bv. viciae).